The chain runs to 276 residues: Dermonecrotic toxin Ls4SicTox-alphaIII1i (276 aa).

Residue His3 is part of the active site. Mg(2+)-binding residues include Glu23 and Asp25. His38 serves as the catalytic Nucleophile. Cysteines 42 and 48 form a disulfide. Asp82 provides a ligand contact to Mg(2+).

Belongs to the arthropod phospholipase D family. Class I subfamily. The cofactor is Mg(2+). Expressed by the venom gland.

The protein localises to the secreted. It carries out the reaction an N-(acyl)-sphingosylphosphocholine = an N-(acyl)-sphingosyl-1,3-cyclic phosphate + choline. The catalysed reaction is an N-(acyl)-sphingosylphosphoethanolamine = an N-(acyl)-sphingosyl-1,3-cyclic phosphate + ethanolamine. It catalyses the reaction a 1-acyl-sn-glycero-3-phosphocholine = a 1-acyl-sn-glycero-2,3-cyclic phosphate + choline. The enzyme catalyses a 1-acyl-sn-glycero-3-phosphoethanolamine = a 1-acyl-sn-glycero-2,3-cyclic phosphate + ethanolamine. Functionally, dermonecrotic toxins cleave the phosphodiester linkage between the phosphate and headgroup of certain phospholipids (sphingolipid and lysolipid substrates), forming an alcohol (often choline) and a cyclic phosphate. This toxin acts on sphingomyelin (SM). It may also act on ceramide phosphoethanolamine (CPE), lysophosphatidylcholine (LPC) and lysophosphatidylethanolamine (LPE), but not on lysophosphatidylserine (LPS), and lysophosphatidylglycerol (LPG). It acts by transphosphatidylation, releasing exclusively cyclic phosphate products as second products. Induces dermonecrosis, hemolysis, increased vascular permeability, edema, inflammatory response, and platelet aggregation. In Loxosceles sp. (strain 4 GJB-2008) (Recluse spider), this protein is Dermonecrotic toxin Ls4SicTox-alphaIII1i.